The following is a 547-amino-acid chain: Zinc metalloproteinase-disintegrin-like BjussuMP-1 (547 aa).

Residues 1–133 (EFKVNGEPVV…KKASKLVVTA (133 aa)) constitute a propeptide that is removed on maturation. One can recognise a Peptidase M12B domain in the interval 141 to 337 (RYVEIVVVVD…HNPQCILNEP (197 aa)). Ca(2+) contacts are provided by glutamate 144 and aspartate 228. 3 disulfide bridges follow: cysteine 252–cysteine 332, cysteine 292–cysteine 316, and cysteine 294–cysteine 299. Position 277 (histidine 277) interacts with Zn(2+). The active site involves glutamate 278. Zn(2+) is bound by residues histidine 281 and histidine 287. Ca(2+) contacts are provided by cysteine 332, asparagine 335, valine 341, asparagine 344, leucine 346, glutamate 348, glutamate 351, and aspartate 354. The 83-residue stretch at 339 to 421 (LTVSGNELLE…DCPRNRFHRN (83 aa)) folds into the Disintegrin domain. 11 disulfide bridges follow: cysteine 353–cysteine 363, cysteine 362–cysteine 385, cysteine 376–cysteine 382, cysteine 381–cysteine 406, cysteine 394–cysteine 413, cysteine 425–cysteine 437, cysteine 444–cysteine 494, cysteine 459–cysteine 501, cysteine 472–cysteine 482, cysteine 489–cysteine 526, and cysteine 520–cysteine 531. N-linked (GlcNAc...) asparagine glycosylation occurs at asparagine 451. Asparagine 504 carries an N-linked (GlcNAc...) asparagine glycan.

Belongs to the venom metalloproteinase (M12B) family. P-III subfamily. P-IIIa sub-subfamily. As to quaternary structure, monomer. Requires Zn(2+) as cofactor. Expressed by the venom gland.

Its subcellular location is the secreted. With respect to regulation, completely inhibited by EDTA, EGTA, 1,10-phenanthroline, and partially by beta-mercaptoethanol. Is not inhibited by aprotinin and leupeptin. This protein is a zinc metalloprotease from snake venom that causes hemorrhage in mice after intradermal injection. It inhibits platelet aggregation induced by collagen and ADP. Has moderate edema activity, but no myotoxic activity. It hydrolyzes the Aalpha-chain and more slowly the Bbeta-chain of fibrinogen, without affecting the gamma-chains. It also shows proteolytic activity on casein. It is unable to clot plasma. It also shows bactericidal activity against E.coli and S.aureus. In Bothrops jararacussu (Jararacussu), this protein is Zinc metalloproteinase-disintegrin-like BjussuMP-1.